A 252-amino-acid chain; its full sequence is Imidazole glycerol phosphate synthase subunit HisF (252 aa).

Active-site residues include D11 and D130.

Belongs to the HisA/HisF family. As to quaternary structure, heterodimer of HisH and HisF.

It is found in the cytoplasm. The enzyme catalyses 5-[(5-phospho-1-deoxy-D-ribulos-1-ylimino)methylamino]-1-(5-phospho-beta-D-ribosyl)imidazole-4-carboxamide + L-glutamine = D-erythro-1-(imidazol-4-yl)glycerol 3-phosphate + 5-amino-1-(5-phospho-beta-D-ribosyl)imidazole-4-carboxamide + L-glutamate + H(+). Its pathway is amino-acid biosynthesis; L-histidine biosynthesis; L-histidine from 5-phospho-alpha-D-ribose 1-diphosphate: step 5/9. IGPS catalyzes the conversion of PRFAR and glutamine to IGP, AICAR and glutamate. The HisF subunit catalyzes the cyclization activity that produces IGP and AICAR from PRFAR using the ammonia provided by the HisH subunit. This chain is Imidazole glycerol phosphate synthase subunit HisF, found in Staphylococcus saprophyticus subsp. saprophyticus (strain ATCC 15305 / DSM 20229 / NCIMB 8711 / NCTC 7292 / S-41).